A 210-amino-acid chain; its full sequence is Protein HEADING DATE REPRESSOR 1 (210 aa).

Positions 1-97 are disordered; sequence MEEPASADPP…GKRSSAEMLL (97 aa). Residues 29 to 49 are a coiled coil; that stretch reads QQELNKEAADEQLNNQAHEEA. Basic and acidic residues-rich tracts occupy residues 45 to 54 and 62 to 79; these read AHEEAMKIDD and DDVH…RKAL. A coiled-coil region spans residues 129–184; sequence RRIAIQEMNRKDREINGLNEQLEEDSRVLELLQKQLADERKKRTEIEKENSMLHEQ.

Interacts with OSK3 and OSK4. As to expression, mostly expressed in leaves, seedlings and floral organs, and, to a lower extent, in panicle, roots, nodes, internodes, leaf joint and sheath.

It localises to the nucleus. In terms of biological role, regulates flowering time via a photoperiod-dependent pathway. Suppressor of flowering that upregulates HD1 and down-regulates EHD1 in long days (LD), thus leading to the down-regulation of HD3A and RFT1. Triggers OSK4-mediated HD1 phosphorylation. This is Protein HEADING DATE REPRESSOR 1 from Oryza sativa subsp. japonica (Rice).